Here is a 452-residue protein sequence, read N- to C-terminus: Fructose-2,6-bisphosphatase (452 aa).

Positions 1–223 (MGYSTISNDN…VFYVMNIRPK (223 aa)) are 6-phosphofructo-2-kinase. 20-28 (GLPARGKSF) contributes to the ATP binding site. Beta-D-fructose 6-phosphate-binding residues include R53 and R78. D104 is a catalytic residue. Residues T106 and R112 each coordinate beta-D-fructose 6-phosphate. 143-148 (NAKDIG) provides a ligand contact to ATP. Residues R169 and Y173 each coordinate beta-D-fructose 6-phosphate. The segment at 224–452 (PKYIWLSRHG…LNDSPLEDKF (229 aa)) is fructose-2,6-bisphosphatase. A beta-D-fructose 2,6-bisphosphate-binding site is contributed by R231. H232 (tele-phosphohistidine intermediate) is an active-site residue. Positions 238 and 244 each coordinate beta-D-fructose 2,6-bisphosphate. The active-site Proton donor/acceptor is E302. 6 residues coordinate beta-D-fructose 2,6-bisphosphate: Y313, R327, K331, Y342, Q368, and R372. 324-327 (FKAR) lines the ATP pocket. ATP is bound by residues 368–372 (QAVLR) and Y404. Residues S435 and S446 each carry the phosphoserine modification.

It in the C-terminal section; belongs to the phosphoglycerate mutase family.

The catalysed reaction is beta-D-fructose 2,6-bisphosphate + H2O = beta-D-fructose 6-phosphate + phosphate. Inhibited by fructose 6-P, activated by glycerol 3-P. Functionally, monofunctional, high-specificity fructose-2,6-bisphosphatase, which releases phosphate from the 2-position of fructose 2,6-bisphosphate. Has no detectable 6-phosphofructo-2-kinase activity. The chain is Fructose-2,6-bisphosphatase from Saccharomyces cerevisiae (strain ATCC 204508 / S288c) (Baker's yeast).